Reading from the N-terminus, the 190-residue chain is Major intrinsically disordered NOTCH2-binding receptor 1-like (190 aa).

At S79 the chain carries Phosphoserine. N-linked (GlcNAc...) asparagine glycosylation is found at N109 and N125. The helical transmembrane segment at G169 to F189 threads the bilayer.

Belongs to the MINAR family. Interacts with NOTCH2. In terms of tissue distribution, highly expressed in the auditory hair cells.

Its subcellular location is the lysosome membrane. The protein localises to the endoplasmic reticulum membrane. Its function is as follows. Binds cholesterol and may regulate the distribution and homeostasis of cholesterol in hair cells. May play a role in angiogenesis. The polypeptide is Major intrinsically disordered NOTCH2-binding receptor 1-like (Homo sapiens (Human)).